The following is a 711-amino-acid chain: Dendrin (711 aa).

Disordered regions lie at residues 1-22, 49-273, 324-446, and 479-677; these read MLDGPLFSEGPDSPRELQDEES, APSR…KKRL, DLNS…SQGL, and PSGV…AELS. The segment covering 75-84 has biased composition (pro residues); it reads PGSPQPPPRR. A coiled-coil region spans residues 102–134; it reads LAEVRAREQEKRKAASQEREAKETERKRRKAGG. A compositionally biased stretch (basic and acidic residues) spans 105–127; it reads VRAREQEKRKAASQEREAKETER. Residues 113–131 are nuclear localization; the sequence is RKAASQEREAKETERKRRK. Residues 150 to 161 show a composition bias toward low complexity; it reads APRVAQLAGLPA. The interval 186–236 is interaction with MAGI2; that stretch reads GSAWAGPWGGRRPGPPSYEAHLLLRGSAGTAPRRRWDRPPPYVAPPSYEGP. 2 stretches are compositionally biased toward low complexity: residues 252 to 262 and 346 to 356; these read PTSSAPAATPA and APAGSATAAPC. Residues 341–436 form an interaction with ACTN1 region; sequence AGTEIAPAGS…LEGWKATRRA (96 aa). Ser389 is subject to Phosphoserine. Residues 408 to 709 form an interaction with CD2AP and NPHS1 region; the sequence is GGTGWRESLG…IRGTQQGNRK (302 aa). Basic and acidic residues predominate over residues 529-546; it reads GEAEGGRPGDSTLEERTF.

As to quaternary structure, forms a ternary complex with MAGI2 and SH3KBP1; recruits DDN to the cytoplasm. Interacts with MAGI1. Interacts with ACTN1 and may interact with WWC1. Interacts with the podocyte slit diaphragm proteins CD2AP, NPHS1 and NPHS2; the interaction with CD2AP and NPHS1 is direct. As to expression, specifically expressed in brain and kidney. Expressed in kidney glomerular capillary loops (at protein level).

It is found in the cell projection. Its subcellular location is the dendritic spine membrane. The protein localises to the cytoplasm. It localises to the endoplasmic reticulum membrane. The protein resides in the perikaryon. It is found in the nucleus. Functionally, promotes apoptosis of kidney glomerular podocytes. Podocytes are highly specialized cells essential to the ultrafiltration of blood, resulting in the extraction of urine and the retention of protein. The protein is Dendrin (DDN) of Homo sapiens (Human).